The following is a 359-amino-acid chain: MALITLRQLLDHAAERLQGYGVPAFNINNMEQGLAILAAARACDAPVIASRGARSYAGDIMLRHIVEALAEMYPQIPICLHQDHGNNEATCLSAIRHGFTSVMMDGSLQADMKTVASYDYNVDITRRVTDAAHWVGASVEGELGVLGSLEKGEAEAEDGSGAEGKLDHSQMLTDPDQAVEFVQATRVDALAIAMGTSHGAYKFSRKPDGEILAMRVIEEIHARLPATHLVMHGSSSVAARLQDLINAHGADMPQTYGVPVEEIERGIRHGVRKVNIDTDCRMALTGQFRKVAMESPKEFDARKFMIPAMKEMEALVRDRFERFGTAGNASKITVIPMDDMAKRYASGALDPAVATAKAA.

Ser-50 is a binding site for D-glyceraldehyde 3-phosphate. The Proton donor role is filled by Asp-83. Zn(2+) is bound by residues His-84, Asp-105, Glu-142, and His-198. Gly-199 is a binding site for dihydroxyacetone phosphate. His-232 contributes to the Zn(2+) binding site. Dihydroxyacetone phosphate is bound by residues 233–235 and 275–278; these read GSS and NIDT.

This sequence belongs to the class II fructose-bisphosphate aldolase family. Homodimer. It depends on Zn(2+) as a cofactor.

It catalyses the reaction beta-D-fructose 1,6-bisphosphate = D-glyceraldehyde 3-phosphate + dihydroxyacetone phosphate. It functions in the pathway carbohydrate biosynthesis; Calvin cycle. It participates in carbohydrate degradation; glycolysis; D-glyceraldehyde 3-phosphate and glycerone phosphate from D-glucose: step 4/4. In terms of biological role, catalyzes the aldol condensation of dihydroxyacetone phosphate (DHAP or glycerone-phosphate) with glyceraldehyde 3-phosphate (G3P) to form fructose 1,6-bisphosphate (FBP) in gluconeogenesis and the reverse reaction in glycolysis. This Cereibacter sphaeroides (Rhodobacter sphaeroides) protein is Fructose-bisphosphate aldolase 1 (cfxA).